Consider the following 219-residue polypeptide: Ribose-5-phosphate isomerase A (219 aa).

Substrate is bound by residues 28-31 (TGST), 81-84 (DGAD), and 94-97 (KGGG). The active-site Proton acceptor is the E103. Residue K121 coordinates substrate.

It belongs to the ribose 5-phosphate isomerase family. Homodimer.

The catalysed reaction is aldehydo-D-ribose 5-phosphate = D-ribulose 5-phosphate. It participates in carbohydrate degradation; pentose phosphate pathway; D-ribose 5-phosphate from D-ribulose 5-phosphate (non-oxidative stage): step 1/1. Catalyzes the reversible conversion of ribose-5-phosphate to ribulose 5-phosphate. The chain is Ribose-5-phosphate isomerase A from Escherichia fergusonii (strain ATCC 35469 / DSM 13698 / CCUG 18766 / IAM 14443 / JCM 21226 / LMG 7866 / NBRC 102419 / NCTC 12128 / CDC 0568-73).